A 79-amino-acid chain; its full sequence is Cell division protein ZapB (79 aa).

The stretch at 4–78 (EVFEKLEAKV…LRALLGKMEE (75 aa)) forms a coiled coil.

The protein belongs to the ZapB family. Homodimer. The ends of the coiled-coil dimer bind to each other, forming polymers. Interacts with FtsZ.

The protein localises to the cytoplasm. Its function is as follows. Non-essential, abundant cell division factor that is required for proper Z-ring formation. It is recruited early to the divisome by direct interaction with FtsZ, stimulating Z-ring assembly and thereby promoting cell division earlier in the cell cycle. Its recruitment to the Z-ring requires functional FtsA or ZipA. In Pectobacterium carotovorum subsp. carotovorum (strain PC1), this protein is Cell division protein ZapB.